Consider the following 378-residue polypeptide: Probable serine/threonine-protein kinase PBL7 (378 aa).

A disordered region spans residues 1-49 (MGWIPCSGKSSGRNKTRRNGDHKLDRKSSDCSVSTSEKSRAKSSLSESK). A lipid anchor (N-myristoyl glycine) is attached at Gly-2. Basic and acidic residues predominate over residues 18–29 (RNGDHKLDRKSS). The segment covering 32–47 (SVSTSEKSRAKSSLSE) has biased composition (low complexity). Residue Thr-62 is modified to Phosphothreonine. Positions 73 to 350 (FRKECLIGEG…ADVVTALSYL (278 aa)) constitute a Protein kinase domain. Residues 79 to 87 (IGEGGFGRV) and Lys-102 contribute to the ATP site. Residue Tyr-147 is modified to Phosphotyrosine. Asp-200 functions as the Proton acceptor in the catalytic mechanism. Ser-204 and Ser-234 each carry phosphoserine. Phosphothreonine is present on residues Thr-235 and Thr-240. At Tyr-248 the chain carries Phosphotyrosine.

This sequence belongs to the protein kinase superfamily. Ser/Thr protein kinase family. As to quaternary structure, interacts with BSU1 and BSL1. In terms of processing, phosphorylated at Ser-43, Ser-46 and Ser-234. In terms of tissue distribution, widely expressed.

It localises to the cell membrane. The catalysed reaction is L-seryl-[protein] + ATP = O-phospho-L-seryl-[protein] + ADP + H(+). It catalyses the reaction L-threonyl-[protein] + ATP = O-phospho-L-threonyl-[protein] + ADP + H(+). Serine/threonine-protein kinase involved in the positive regulation of brassinosteroid (BR) signaling and plant growth. Phosphorylates both BSU1 and BSL1 in vitro. The sequence is that of Probable serine/threonine-protein kinase PBL7 from Arabidopsis thaliana (Mouse-ear cress).